We begin with the raw amino-acid sequence, 55 residues long: Accessory gland-specific peptide 70A (55 aa).

A signal peptide spans 1–19 (MKTLSLFLVLVCLLGLVQS). P28, P32, P34, and P38 each carry hydroxyproline. Cysteines 43 and 55 form a disulfide.

In terms of tissue distribution, main cells of the accessory glands of males (paragonial gland).

It is found in the secreted. In terms of biological role, represses female sexual receptivity and stimulates oviposition. The sequence is that of Accessory gland-specific peptide 70A (Acp70A) from Drosophila mauritiana (Fruit fly).